The sequence spans 347 residues: Holliday junction branch migration complex subunit RuvB (347 aa).

Residues 1–183 are large ATPase domain (RuvB-L); that stretch reads MSDERVVTPR…FGSVHRLEFY (183 aa). Residues leucine 22, arginine 23, glycine 64, lysine 67, threonine 68, serine 69, 130–132, arginine 173, tyrosine 183, and arginine 220 each bind ATP; that span reads EDF. Threonine 68 serves as a coordination point for Mg(2+). The interval 184–254 is small ATPAse domain (RuvB-S); sequence SVDALYEIVM…VARDALAKLE (71 aa). The tract at residues 257–347 is head domain (RuvB-H); the sequence is HLGLDENDRR…NGAEQGRLWT (91 aa). DNA is bound by residues arginine 312 and arginine 317.

The protein belongs to the RuvB family. As to quaternary structure, homohexamer. Forms an RuvA(8)-RuvB(12)-Holliday junction (HJ) complex. HJ DNA is sandwiched between 2 RuvA tetramers; dsDNA enters through RuvA and exits via RuvB. An RuvB hexamer assembles on each DNA strand where it exits the tetramer. Each RuvB hexamer is contacted by two RuvA subunits (via domain III) on 2 adjacent RuvB subunits; this complex drives branch migration. In the full resolvosome a probable DNA-RuvA(4)-RuvB(12)-RuvC(2) complex forms which resolves the HJ.

The protein localises to the cytoplasm. It carries out the reaction ATP + H2O = ADP + phosphate + H(+). The RuvA-RuvB-RuvC complex processes Holliday junction (HJ) DNA during genetic recombination and DNA repair, while the RuvA-RuvB complex plays an important role in the rescue of blocked DNA replication forks via replication fork reversal (RFR). RuvA specifically binds to HJ cruciform DNA, conferring on it an open structure. The RuvB hexamer acts as an ATP-dependent pump, pulling dsDNA into and through the RuvAB complex. RuvB forms 2 homohexamers on either side of HJ DNA bound by 1 or 2 RuvA tetramers; 4 subunits per hexamer contact DNA at a time. Coordinated motions by a converter formed by DNA-disengaged RuvB subunits stimulates ATP hydrolysis and nucleotide exchange. Immobilization of the converter enables RuvB to convert the ATP-contained energy into a lever motion, pulling 2 nucleotides of DNA out of the RuvA tetramer per ATP hydrolyzed, thus driving DNA branch migration. The RuvB motors rotate together with the DNA substrate, which together with the progressing nucleotide cycle form the mechanistic basis for DNA recombination by continuous HJ branch migration. Branch migration allows RuvC to scan DNA until it finds its consensus sequence, where it cleaves and resolves cruciform DNA. The chain is Holliday junction branch migration complex subunit RuvB from Roseiflexus castenholzii (strain DSM 13941 / HLO8).